The primary structure comprises 501 residues: Aldehyde dehydrogenase 1A1 (501 aa).

N-acetylserine is present on Ser2. N6-acetyllysine occurs at positions 91 and 128. NAD(+) is bound by residues 167–170 (IPWN), 193–196 (KPAE), 226–227 (GP), and 246–247 (GS). Residue Lys252 is modified to N6-acetyllysine. The active-site Proton acceptor is Glu269. 269-271 (ELG) lines the NAD(+) pocket. Residue Cys303 is the Nucleophile of the active site. Residues 336–501 (LTPGVSQGPQ…VTIKISQKNS (166 aa)) form a mediates interaction with PRMT3 region. A Phosphothreonine modification is found at Thr337. 349–353 (EQYEK) provides a ligand contact to NAD(+). Lys353 and Lys367 each carry N6-acetyllysine. 400–402 (EIF) contributes to the NAD(+) binding site. Lys410 carries the post-translational modification N6-acetyllysine. Ser413 carries the post-translational modification Phosphoserine. An N6-acetyllysine mark is found at Lys419 and Lys495.

This sequence belongs to the aldehyde dehydrogenase family. In terms of assembly, homotetramer. Interacts with PRMT3; the interaction is direct, inhibits ALDH1A1 aldehyde dehydrogenase activity and is independent of the methyltransferase activity of PRMT3. Post-translationally, the N-terminus is blocked most probably by acetylation.

It localises to the cytoplasm. The protein resides in the cytosol. It is found in the cell projection. Its subcellular location is the axon. It catalyses the reaction an aldehyde + NAD(+) + H2O = a carboxylate + NADH + 2 H(+). The catalysed reaction is all-trans-retinal + NAD(+) + H2O = all-trans-retinoate + NADH + 2 H(+). It carries out the reaction 9-cis-retinal + NAD(+) + H2O = 9-cis-retinoate + NADH + 2 H(+). The enzyme catalyses 11-cis-retinal + NAD(+) + H2O = 11-cis-retinoate + NADH + 2 H(+). It catalyses the reaction 13-cis-retinal + NAD(+) + H2O = 13-cis-retinoate + NADH + 2 H(+). The catalysed reaction is 3-deoxyglucosone + NAD(+) + H2O = 2-dehydro-3-deoxy-D-gluconate + NADH + 2 H(+). It carries out the reaction (E)-4-hydroxynon-2-enal + NAD(+) + H2O = (E)-4-hydroxynon-2-enoate + NADH + 2 H(+). The enzyme catalyses malonaldehyde + NAD(+) + H2O = 3-oxopropanoate + NADH + 2 H(+). It catalyses the reaction hexanal + NAD(+) + H2O = hexanoate + NADH + 2 H(+). The catalysed reaction is propanal + NAD(+) + H2O = propanoate + NADH + 2 H(+). It carries out the reaction acetaldehyde + NAD(+) + H2O = acetate + NADH + 2 H(+). The enzyme catalyses benzaldehyde + NAD(+) + H2O = benzoate + NADH + 2 H(+). It catalyses the reaction 4-aminobutanal + NAD(+) + H2O = 4-aminobutanoate + NADH + 2 H(+). It participates in cofactor metabolism; retinol metabolism. Its activity is regulated as follows. Inhibited by duocarmycin analogs. Cytosolic dehydrogenase that catalyzes the irreversible oxidation of a wide range of aldehydes to their corresponding carboxylic acid. Functions downstream of retinol dehydrogenases and catalyzes the oxidation of retinaldehyde into retinoic acid, the second step in the oxidation of retinol/vitamin A into retinoic acid. This pathway is crucial to control the levels of retinol and retinoic acid, two important molecules which excess can be teratogenic and cytotoxic. Also oxidizes aldehydes resulting from lipid peroxidation like (E)-4-hydroxynon-2-enal/HNE, malonaldehyde and hexanal that form protein adducts and are highly cytotoxic. By participating for instance to the clearance of (E)-4-hydroxynon-2-enal/HNE in the lens epithelium prevents the formation of HNE-protein adducts and lens opacification. Also functions downstream of fructosamine-3-kinase in the fructosamine degradation pathway by catalyzing the oxidation of 3-deoxyglucosone, the carbohydrate product of fructosamine 3-phosphate decomposition, which is itself a potent glycating agent that may react with lysine and arginine side-chains of proteins. Also has an aminobutyraldehyde dehydrogenase activity and is probably part of an alternative pathway for the biosynthesis of GABA/4-aminobutanoate in midbrain, thereby playing a role in GABAergic synaptic transmission. The polypeptide is Aldehyde dehydrogenase 1A1 (Ovis aries (Sheep)).